The sequence spans 94 residues: Aspartyl/glutamyl-tRNA(Asn/Gln) amidotransferase subunit C (94 aa).

It belongs to the GatC family. As to quaternary structure, heterotrimer of A, B and C subunits.

It catalyses the reaction L-glutamyl-tRNA(Gln) + L-glutamine + ATP + H2O = L-glutaminyl-tRNA(Gln) + L-glutamate + ADP + phosphate + H(+). The enzyme catalyses L-aspartyl-tRNA(Asn) + L-glutamine + ATP + H2O = L-asparaginyl-tRNA(Asn) + L-glutamate + ADP + phosphate + 2 H(+). Functionally, allows the formation of correctly charged Asn-tRNA(Asn) or Gln-tRNA(Gln) through the transamidation of misacylated Asp-tRNA(Asn) or Glu-tRNA(Gln) in organisms which lack either or both of asparaginyl-tRNA or glutaminyl-tRNA synthetases. The reaction takes place in the presence of glutamine and ATP through an activated phospho-Asp-tRNA(Asn) or phospho-Glu-tRNA(Gln). This is Aspartyl/glutamyl-tRNA(Asn/Gln) amidotransferase subunit C from Carboxydothermus hydrogenoformans (strain ATCC BAA-161 / DSM 6008 / Z-2901).